The sequence spans 295 residues: Acetylglutamate kinase (295 aa).

Residues 66–67 (GG), arginine 88, and asparagine 193 each bind substrate.

The protein belongs to the acetylglutamate kinase family. ArgB subfamily.

The protein localises to the cytoplasm. The catalysed reaction is N-acetyl-L-glutamate + ATP = N-acetyl-L-glutamyl 5-phosphate + ADP. It participates in amino-acid biosynthesis; L-arginine biosynthesis; N(2)-acetyl-L-ornithine from L-glutamate: step 2/4. Its function is as follows. Catalyzes the ATP-dependent phosphorylation of N-acetyl-L-glutamate. The polypeptide is Acetylglutamate kinase (Bradyrhizobium diazoefficiens (strain JCM 10833 / BCRC 13528 / IAM 13628 / NBRC 14792 / USDA 110)).